The following is a 410-amino-acid chain: MKAEIIAIGTEILLGDIINSNAQYLAQELAALGIDMYYQQVVGDNEIRIMHAFDEAYSRSDIIITTGGLGPTDDDITKEVAAKYFNKELIQDENSIKKIKDYFKFRERVMTKNNLKQGLIPEGATVIKNNNGTAPGVIIEDDNKIMIILPGPPKEMKPMFEESVKPYLQEKSDSILVSRVVKILGIGESAVAEEIKDLIDAQTNPTIAPYAKDVGVMLRITAKAETKDEALKLIEPIEEEIKNRLGDNVYATEDINIEEVVARLLIEKKLTISTAESCTGGMIASYLINYPGISEVFLEGAVTYSNEAKHNRLGVNNDILNKYGAVSEETAREMAIGIAKTANTDVSIVTTGIAGPEGGTLEKPVGLVFIGVYVQGKVTIQKCLFKGDRNKVRLQATITGLDMLRRILIK.

The protein belongs to the CinA family.

This chain is Putative competence-damage inducible protein, found in Clostridium beijerinckii (strain ATCC 51743 / NCIMB 8052) (Clostridium acetobutylicum).